A 469-amino-acid chain; its full sequence is 3-isopropylmalate dehydratase large subunit (469 aa).

Cys350, Cys410, and Cys413 together coordinate [4Fe-4S] cluster.

Belongs to the aconitase/IPM isomerase family. LeuC type 1 subfamily. Heterodimer of LeuC and LeuD. The cofactor is [4Fe-4S] cluster.

It catalyses the reaction (2R,3S)-3-isopropylmalate = (2S)-2-isopropylmalate. It functions in the pathway amino-acid biosynthesis; L-leucine biosynthesis; L-leucine from 3-methyl-2-oxobutanoate: step 2/4. Catalyzes the isomerization between 2-isopropylmalate and 3-isopropylmalate, via the formation of 2-isopropylmaleate. This is 3-isopropylmalate dehydratase large subunit from Sinorhizobium medicae (strain WSM419) (Ensifer medicae).